The primary structure comprises 346 residues: 3',5'-cyclic-nucleotide phosphodiesterase (346 aa).

This sequence belongs to the cyclic nucleotide phosphodiesterase class-II family.

The catalysed reaction is a nucleoside 3',5'-cyclic phosphate + H2O = a nucleoside 5'-phosphate + H(+). The chain is 3',5'-cyclic-nucleotide phosphodiesterase (cgs2) from Schizosaccharomyces pombe (strain 972 / ATCC 24843) (Fission yeast).